We begin with the raw amino-acid sequence, 215 residues long: 3-isopropylmalate dehydratase small subunit (215 aa).

It belongs to the LeuD family. LeuD type 1 subfamily. Heterodimer of LeuC and LeuD.

It carries out the reaction (2R,3S)-3-isopropylmalate = (2S)-2-isopropylmalate. The protein operates within amino-acid biosynthesis; L-leucine biosynthesis; L-leucine from 3-methyl-2-oxobutanoate: step 2/4. Catalyzes the isomerization between 2-isopropylmalate and 3-isopropylmalate, via the formation of 2-isopropylmaleate. This is 3-isopropylmalate dehydratase small subunit from Acinetobacter baumannii (strain AB307-0294).